The primary structure comprises 92 residues: Small ribosomal subunit protein uS19c (92 aa).

This sequence belongs to the universal ribosomal protein uS19 family.

It is found in the plastid. It localises to the chloroplast. Functionally, protein S19 forms a complex with S13 that binds strongly to the 16S ribosomal RNA. The protein is Small ribosomal subunit protein uS19c of Liriodendron tulipifera (Tuliptree).